Consider the following 122-residue polypeptide: Large ribosomal subunit protein uL14 (122 aa).

It belongs to the universal ribosomal protein uL14 family. Part of the 50S ribosomal subunit. Forms a cluster with proteins L3 and L19. In the 70S ribosome, L14 and L19 interact and together make contacts with the 16S rRNA in bridges B5 and B8.

Binds to 23S rRNA. Forms part of two intersubunit bridges in the 70S ribosome. The sequence is that of Large ribosomal subunit protein uL14 from Mycoplasma capricolum subsp. capricolum (strain California kid / ATCC 27343 / NCTC 10154).